A 598-amino-acid chain; its full sequence is UvrABC system protein C (598 aa).

The region spanning 14 to 91 is the GIY-YIG domain; the sequence is DSPGCYLHKD…IQKNMPKYNI (78 aa). Residues 196–231 form the UVR domain; sequence DKIIEDLRSKMLAASEEMAFERAAEYRDLISGIATM.

Belongs to the UvrC family. As to quaternary structure, interacts with UvrB in an incision complex.

Its subcellular location is the cytoplasm. The UvrABC repair system catalyzes the recognition and processing of DNA lesions. UvrC both incises the 5' and 3' sides of the lesion. The N-terminal half is responsible for the 3' incision and the C-terminal half is responsible for the 5' incision. This is UvrABC system protein C from Streptococcus pyogenes serotype M6 (strain ATCC BAA-946 / MGAS10394).